We begin with the raw amino-acid sequence, 241 residues long: Demethylmenaquinone methyltransferase (241 aa).

Residues T60, D81, and 106 to 107 (DA) each bind S-adenosyl-L-methionine.

This sequence belongs to the class I-like SAM-binding methyltransferase superfamily. MenG/UbiE family.

It catalyses the reaction a 2-demethylmenaquinol + S-adenosyl-L-methionine = a menaquinol + S-adenosyl-L-homocysteine + H(+). The protein operates within quinol/quinone metabolism; menaquinone biosynthesis; menaquinol from 1,4-dihydroxy-2-naphthoate: step 2/2. Functionally, methyltransferase required for the conversion of demethylmenaquinol (DMKH2) to menaquinol (MKH2). The polypeptide is Demethylmenaquinone methyltransferase (Staphylococcus epidermidis (strain ATCC 35984 / DSM 28319 / BCRC 17069 / CCUG 31568 / BM 3577 / RP62A)).